Reading from the N-terminus, the 127-residue chain is Glycine cleavage system H protein (127 aa).

One can recognise a Lipoyl-binding domain in the interval 22–104 (KVRIGITDFA…YEKAWMIVVE (83 aa)). At lysine 63 the chain carries N6-lipoyllysine.

The protein belongs to the GcvH family. The glycine cleavage system is composed of four proteins: P, T, L and H. The cofactor is (R)-lipoate.

In terms of biological role, the glycine cleavage system catalyzes the degradation of glycine. The H protein shuttles the methylamine group of glycine from the P protein to the T protein. Functionally, is also involved in protein lipoylation via its role as an octanoyl/lipoyl carrier protein intermediate. This chain is Glycine cleavage system H protein, found in Bacillus licheniformis (strain ATCC 14580 / DSM 13 / JCM 2505 / CCUG 7422 / NBRC 12200 / NCIMB 9375 / NCTC 10341 / NRRL NRS-1264 / Gibson 46).